Consider the following 466-residue polypeptide: Cysteine--tRNA ligase (466 aa).

Residue cysteine 28 coordinates Zn(2+). The 'HIGH' region motif lies at 30 to 40; that stretch reads PTVYNFFHIGN. The Zn(2+) site is built by cysteine 208, histidine 233, and glutamate 237. The 'KMSKS' region motif lies at 265-269; it reads KMSKS. Lysine 268 is a binding site for ATP.

This sequence belongs to the class-I aminoacyl-tRNA synthetase family. As to quaternary structure, monomer. Requires Zn(2+) as cofactor.

The protein localises to the cytoplasm. The enzyme catalyses tRNA(Cys) + L-cysteine + ATP = L-cysteinyl-tRNA(Cys) + AMP + diphosphate. This Clostridium perfringens (strain 13 / Type A) protein is Cysteine--tRNA ligase.